The following is a 285-amino-acid chain: NADPH-dependent 7-cyano-7-deazaguanine reductase (285 aa).

80–82 serves as a coordination point for substrate; it reads VES. 82 to 83 contacts NADPH; that stretch reads SK. Cysteine 191 serves as the catalytic Thioimide intermediate. Residue aspartate 198 is the Proton donor of the active site. Position 231-232 (231-232) interacts with substrate; that stretch reads HE. 260 to 261 lines the NADPH pocket; the sequence is RG.

Belongs to the GTP cyclohydrolase I family. QueF type 2 subfamily. Homodimer.

The protein resides in the cytoplasm. The catalysed reaction is 7-aminomethyl-7-carbaguanine + 2 NADP(+) = 7-cyano-7-deazaguanine + 2 NADPH + 3 H(+). It participates in tRNA modification; tRNA-queuosine biosynthesis. Functionally, catalyzes the NADPH-dependent reduction of 7-cyano-7-deazaguanine (preQ0) to 7-aminomethyl-7-deazaguanine (preQ1). In Psychrobacter arcticus (strain DSM 17307 / VKM B-2377 / 273-4), this protein is NADPH-dependent 7-cyano-7-deazaguanine reductase.